The sequence spans 115 residues: Pancreatic progenitor cell differentiation and proliferation factor B (115 aa).

The interval 21–48 is disordered; sequence IGSTSSSSSCGSSEYSGEVIPHHPGLPK. A compositionally biased stretch (low complexity) spans 22 to 37; sequence GSTSSSSSCGSSEYSG.

This sequence belongs to the PPDPF family.

Probable regulator of exocrine pancreas development. The protein is Pancreatic progenitor cell differentiation and proliferation factor B (ppdpfb) of Danio rerio (Zebrafish).